The following is a 384-amino-acid chain: Probable protein phosphatase 2C 48 (384 aa).

Positions Ile-47 to Leu-358 constitute a PPM-type phosphatase domain. Position 78 is a phosphoserine (Ser-78). 4 residues coordinate Mn(2+): Asp-89, Gly-90, Asp-290, and Asp-349.

The protein belongs to the PP2C family. The cofactor is Mg(2+). Requires Mn(2+) as cofactor.

It catalyses the reaction O-phospho-L-seryl-[protein] + H2O = L-seryl-[protein] + phosphate. The enzyme catalyses O-phospho-L-threonyl-[protein] + H2O = L-threonyl-[protein] + phosphate. Functionally, may dephosphorylate and repress plasma membrane H(+)-ATPases (PM H(+)-ATPases, e.g. AHA1 and AHA2), thus influencing negatively plant growth and fitness. This Arabidopsis thaliana (Mouse-ear cress) protein is Probable protein phosphatase 2C 48.